Reading from the N-terminus, the 266-residue chain is MRPLARLRGRRVVPQRSAGELDAMAAAGAVVAAALRAIRAAAAPGTSSLSLDEIAESVIRESGATPSFLGYHGYPASICASINDRVVHGIPSTAEVLAPGDLVSIDCGAVLDGWHGDAAITFGVGALSDADEALSEATRESLQAGIAAMVVGNRLTDVAHAIETGTRAAELRYGRSFGIVAGYGGHGIGRQMHMDPFLPNEGAPGRGPLLAAGSVLAIEPMLTLGTTKTVVLDDKWTVTTADGSRAAHWEHTVAVTDDGPRILTLG.

His-88 serves as a coordination point for substrate. Residues Asp-106, Asp-117, and His-186 each contribute to the a divalent metal cation site. His-193 is a substrate binding site. Positions 219 and 250 each coordinate a divalent metal cation.

This sequence belongs to the peptidase M24A family. Methionine aminopeptidase type 1 subfamily. As to quaternary structure, monomer. Co(2+) is required as a cofactor. The cofactor is Zn(2+). It depends on Mn(2+) as a cofactor. Requires Fe(2+) as cofactor.

The catalysed reaction is Release of N-terminal amino acids, preferentially methionine, from peptides and arylamides.. Removes the N-terminal methionine from nascent proteins. The N-terminal methionine is often cleaved when the second residue in the primary sequence is small and uncharged (Met-Ala-, Cys, Gly, Pro, Ser, Thr, or Val). Requires deformylation of the N(alpha)-formylated initiator methionine before it can be hydrolyzed. This Mycobacterium tuberculosis (strain CDC 1551 / Oshkosh) protein is Methionine aminopeptidase 1.